The chain runs to 178 residues: Riboflavin kinase (178 aa).

Mg(2+)-binding residues include Thr39 and Asn41. Catalysis depends on Glu116, which acts as the Nucleophile.

This sequence belongs to the flavokinase family. Zn(2+) serves as cofactor. The cofactor is Mg(2+).

The catalysed reaction is riboflavin + ATP = FMN + ADP + H(+). The protein operates within cofactor biosynthesis; FMN biosynthesis; FMN from riboflavin (ATP route): step 1/1. Functionally, catalyzes the phosphorylation of riboflavin (vitamin B2) to form flavin mononucleotide (FMN) coenzyme. In Scheffersomyces stipitis (strain ATCC 58785 / CBS 6054 / NBRC 10063 / NRRL Y-11545) (Yeast), this protein is Riboflavin kinase (FMN1).